Consider the following 205-residue polypeptide: Ras-related protein RABB1a (205 aa).

Position 13–20 (13–20 (GDTGVGKS)) interacts with GTP. Positions 35–43 (HDLTIGVEF) match the Effector region motif. GTP contacts are provided by residues 61–65 (DTAGQ), 119–122 (NKCD), and 149–150 (SA). Positions 179–205 (ANEPGITPGPFGGKDASSSQQRRGCCG) are disordered. Over residues 194 to 205 (ASSSQQRRGCCG) the composition is skewed to polar residues. Residues cysteine 203 and cysteine 204 are each lipidated (S-geranylgeranyl cysteine).

Belongs to the small GTPase superfamily. Rab family.

The protein localises to the cell membrane. Its function is as follows. Intracellular vesicle trafficking and protein transport. The chain is Ras-related protein RABB1a (RABB1A) from Arabidopsis thaliana (Mouse-ear cress).